The primary structure comprises 339 residues: Transcription initiation factor IIB (339 aa).

The TFIIB-type zinc-finger motif lies at 39–70; the sequence is EELICPVCGSKSIIKDYERAEIVCEMCGCVLQ. Zn(2+)-binding residues include Cys43, Cys46, Cys62, and Cys65. 2 tandem repeats follow at residues 156-239 and 250-331.

This sequence belongs to the TFIIB family.

Functionally, stabilizes TBP binding to an archaeal box-A promoter. Also responsible for recruiting RNA polymerase II to the pre-initiation complex (DNA-TBP-TFIIB). The protein is Transcription initiation factor IIB of Methanococcus maripaludis (strain DSM 14266 / JCM 13030 / NBRC 101832 / S2 / LL).